The chain runs to 673 residues: L-type lectin-domain containing receptor kinase SIT2 (673 aa).

The first 27 residues, 1 to 27 (MVLPKPEMPFFVLLLFLGLGCLRPAAA), serve as a signal peptide directing secretion. Over 28 to 296 (TDERFVFNGF…FPKPRSKTLE (269 aa)) the chain is Extracellular. The legume-lectin like stretch occupies residues 32 to 270 (FVFNGFTGAN…VLGWSFKMNG (239 aa)). 9 N-linked (GlcNAc...) asparagine glycosylation sites follow: N41, N60, N82, N118, N138, N191, N214, N235, and N276. Residues 297–317 (IVLPIASAVLVFAVAAAVFVF) traverse the membrane as a helical segment. The Cytoplasmic segment spans residues 318–673 (MRRRRMFSEL…GTFSDLSGGR (356 aa)). Residues 352-631 (FSDKRLLGIG…LEGDVPLPEL (280 aa)) form the Protein kinase domain. Residues 358–366 (LGIGGFGRV) and K381 contribute to the ATP site. D477 serves as the catalytic Proton acceptor.

In the C-terminal section; belongs to the protein kinase superfamily. Ser/Thr protein kinase family. It in the N-terminal section; belongs to the leguminous lectin family. As to expression, mainly expressed in root epidermal cells.

The protein resides in the cell membrane. It carries out the reaction L-seryl-[protein] + ATP = O-phospho-L-seryl-[protein] + ADP + H(+). The enzyme catalyses L-threonyl-[protein] + ATP = O-phospho-L-threonyl-[protein] + ADP + H(+). Functionally, lectin-domain containing receptor kinase involved in salt stress response. Acts as a negative regulator of salt tolerance. The chain is L-type lectin-domain containing receptor kinase SIT2 from Oryza sativa subsp. japonica (Rice).